Here is an 833-residue protein sequence, read N- to C-terminus: Ventricular zone-expressed PH domain-containing protein 1 (833 aa).

Interaction with TGFBR1 stretches follow at residues 201–319 (AELL…LANM) and 663–833 (ESTF…TTYL). In terms of domain architecture, PH spans 716–819 (QPLIEGKLKE…WLQCINVALA (104 aa)).

It belongs to the MELT/VEPH family. As to quaternary structure, interacts with TGFBR1. As to expression, specifically expressed in kidney and eye. In the eye, expressed in retinal pigmented epithelium but not in the neural retina.

It localises to the cell membrane. Its function is as follows. Interacts with TGF-beta receptor type-1 (TGFBR1) and inhibits dissociation of activated SMAD2 from TGFBR1, impeding its nuclear accumulation and resulting in impaired TGF-beta signaling. May also affect FOXO, Hippo and Wnt signaling. In Mus musculus (Mouse), this protein is Ventricular zone-expressed PH domain-containing protein 1 (Veph1).